An 82-amino-acid chain; its full sequence is Penaeidin-3d (82 aa).

Residues 1–19 (MRLVVCLVFLASFALVCQG) form the signal peptide. Q20 carries the pyrrolidone carboxylic acid modification. Cystine bridges form between C51–C66, C55–C73, and C67–C74. At S81 the chain carries Serine amide.

The protein belongs to the penaeidin family.

Its subcellular location is the cytoplasmic granule. Antibacterial and antifungal activity. Presents chitin-binding activity. The sequence is that of Penaeidin-3d from Penaeus vannamei (Whiteleg shrimp).